The sequence spans 280 residues: Large ribosomal subunit protein uL2 (280 aa).

Disordered stretches follow at residues 33–55 (LTEG…RRRG) and 224–266 (AMNP…KASQ). The segment covering 256–266 (TRTRNKNKASQ) has biased composition (basic residues).

Belongs to the universal ribosomal protein uL2 family. As to quaternary structure, part of the 50S ribosomal subunit. Forms a bridge to the 30S subunit in the 70S ribosome.

Functionally, one of the primary rRNA binding proteins. Required for association of the 30S and 50S subunits to form the 70S ribosome, for tRNA binding and peptide bond formation. It has been suggested to have peptidyltransferase activity; this is somewhat controversial. Makes several contacts with the 16S rRNA in the 70S ribosome. This chain is Large ribosomal subunit protein uL2, found in Ruegeria pomeroyi (strain ATCC 700808 / DSM 15171 / DSS-3) (Silicibacter pomeroyi).